A 314-amino-acid chain; its full sequence is Porphobilinogen deaminase (314 aa).

The residue at position 234 (Cys-234) is an S-(dipyrrolylmethanemethyl)cysteine.

It belongs to the HMBS family. Monomer. Requires dipyrromethane as cofactor.

It catalyses the reaction 4 porphobilinogen + H2O = hydroxymethylbilane + 4 NH4(+). The protein operates within porphyrin-containing compound metabolism; protoporphyrin-IX biosynthesis; coproporphyrinogen-III from 5-aminolevulinate: step 2/4. Its function is as follows. Tetrapolymerization of the monopyrrole PBG into the hydroxymethylbilane pre-uroporphyrinogen in several discrete steps. The protein is Porphobilinogen deaminase of Mycobacterium ulcerans (strain Agy99).